Consider the following 432-residue polypeptide: Ciliated left-right organizer protein containing ZP-N domains homolog (432 aa).

In terms of tissue distribution, expressed specifically by cells of the ciliated left-right organizer.

In Danio rerio (Zebrafish), this protein is Ciliated left-right organizer protein containing ZP-N domains homolog (ciroz).